Reading from the N-terminus, the 72-residue chain is Small ribosomal subunit protein bS18c (72 aa).

Belongs to the bacterial ribosomal protein bS18 family. Part of the 30S ribosomal subunit.

The protein localises to the plastid. Its subcellular location is the chloroplast. This chain is Small ribosomal subunit protein bS18c, found in Phaeodactylum tricornutum (strain CCAP 1055/1).